A 387-amino-acid chain; its full sequence is MTVLKMTDLDLQGKRVLIREDLNVPIKDGVVSSDARILASLPTIRLALEKGAAVMVCSHLGRPTEGEFSAENSLKPVAEYLSKALGRDVPLVADYLDGVDVKAGDIVLFENVRFNKGEKKNADELAQKYAALCDVFVMDAFGTAHRAEGSTHGVAKYAKVAAAGPLLAAELEALGKALGAPAQPMAAIVAGSKVSTKLDVLNSLSAICDQLIVGGGIANTFLAAAGHKVGKSLYEPDLLDTARAIAAKVSVPLPTDVVVAKEFAESATATVKLIADVADDDMILDIGPQTAAHFAELLKSSGTILWNGPVGVFEFDQFGEGTKTLAKAIAESKAFSIAGGGDTLAAIDKYGVADQISYISTGGGAFLEFVEGKVLPAVEMLEQRARA.

Residues 21-23, R36, 59-62, R113, and R146 each bind substrate; these read DLN and HLGR. Residues K197, E314, and 340–343 each bind ATP; that span reads GGDT.

This sequence belongs to the phosphoglycerate kinase family. In terms of assembly, monomer.

It localises to the cytoplasm. It carries out the reaction (2R)-3-phosphoglycerate + ATP = (2R)-3-phospho-glyceroyl phosphate + ADP. Its pathway is carbohydrate degradation; glycolysis; pyruvate from D-glyceraldehyde 3-phosphate: step 2/5. This Pseudomonas syringae pv. tomato (strain ATCC BAA-871 / DC3000) protein is Phosphoglycerate kinase.